Here is a 266-residue protein sequence, read N- to C-terminus: Regulatory protein RecX (266 aa).

Belongs to the RecX family.

The protein localises to the cytoplasm. Its function is as follows. Modulates RecA activity. The protein is Regulatory protein RecX of Levilactobacillus brevis (strain ATCC 367 / BCRC 12310 / CIP 105137 / JCM 1170 / LMG 11437 / NCIMB 947 / NCTC 947) (Lactobacillus brevis).